Reading from the N-terminus, the 435-residue chain is MNQIRQAPATSASNATESKQEIRNYTMNFGPQHPAAHGVLRLILEMDGETVVRADPHIGLLHRGTEKLAESKPFNQSIGYMDRLDYVSMMCNEHAYVRAIETLIGIQAPERAQYIRTMFDEITRILNHLMWLGSNALDLGAMAVMLYAFREREELMDVYEAISGARMHAAYYRPGGVYRDLPDTMPKYKQSRWHKGKALKRLNAAREGSMLDFLEHFADTFPQRIDEYETLLTDNRIWKQRTVGVGVIEPDVAKAWGMTGVMLRGSGVAWDLRKKQPYAKYDAVDFDIPLGTCGDCYDRYLCRVAEMRESNRIIKQCVQWLKVNPGQVMVENFKVAPPKRESMKDDMEALIHHFKLFSEGYCVPAGETYSAVEAPKGEFGCYLISDGANKPFRVHLRAPGFAHLSSMDAVVRGYMLADVVAMIGTYDLVFGEVDR.

The protein belongs to the complex I 49 kDa subunit family. NDH-1 is composed of 14 different subunits. Subunits NuoB, C, D, E, F, and G constitute the peripheral sector of the complex.

The protein localises to the cell inner membrane. It catalyses the reaction a quinone + NADH + 5 H(+)(in) = a quinol + NAD(+) + 4 H(+)(out). Functionally, NDH-1 shuttles electrons from NADH, via FMN and iron-sulfur (Fe-S) centers, to quinones in the respiratory chain. The immediate electron acceptor for the enzyme in this species is believed to be ubiquinone. Couples the redox reaction to proton translocation (for every two electrons transferred, four hydrogen ions are translocated across the cytoplasmic membrane), and thus conserves the redox energy in a proton gradient. In Xylella fastidiosa (strain 9a5c), this protein is NADH-quinone oxidoreductase subunit D.